The primary structure comprises 764 residues: Protein Lines homolog 1 (764 aa).

Disordered regions lie at residues 615-668 and 682-702; these read SQSQ…TSLC and WEEQKEHSLEPLLSAESSSPF. Over residues 645 to 654 the composition is skewed to acidic residues; sequence DSSEASEEET. The residue at position 650 (serine 650) is a Phosphoserine. Residues 658–668 are compositionally biased toward polar residues; it reads HLANSKQTSLC. The segment covering 691-702 has biased composition (low complexity); sequence EPLLSAESSSPF.

Belongs to the protein lines family.

The sequence is that of Protein Lines homolog 1 from Mus musculus (Mouse).